The following is a 171-amino-acid chain: Tubulin polymerization-promoting protein family member 2 (171 aa).

The interval 120 to 171 (LTDTSKYTGTHKERFDESGKGKGIAGREDVTDNSGYVSGYKGAGTYDKKGSN) is disordered. The span at 129-149 (THKERFDESGKGKGIAGREDV) shows a compositional bias: basic and acidic residues.

This sequence belongs to the TPPP family.

The protein localises to the cytoplasm. Its subcellular location is the cytosol. The protein resides in the cell projection. It is found in the cilium. It localises to the flagellum. Probable regulator of microtubule dynamics required for sperm motility. In contrast to other members of the family, has no microtubule bundling activity. The protein is Tubulin polymerization-promoting protein family member 2 of Bos taurus (Bovine).